The primary structure comprises 64 residues: MSTKNRTRRTTTRNIRFPNQMIEQINIALDQKGSGNFSAWVIEACRRRLTSEKRAYTSIKSDEE.

This is an uncharacterized protein from Escherichia coli O157:H7.